We begin with the raw amino-acid sequence, 670 residues long: ATP-dependent RNA helicase DDX18 (670 aa).

Polar residues-rich tracts occupy residues 31 to 42 (SNLTLSETQNGD) and 83 to 105 (VTKS…SSNS). A disordered region spans residues 31-169 (SNLTLSETQN…ESEVPSLPLG (139 aa)). The segment covering 117-154 (MVNDAEPDTKKAKTENKGKSEEESAETTKETENNVEKP) has biased composition (basic and acidic residues). A Q motif motif is present at residues 179-207 (FASLCNLVNENTLKAIKEMGFTNMTEIQH). Residues 210-385 (IRPLLEGRDL…RISLKKEPLY (176 aa)) enclose the Helicase ATP-binding domain. 223-230 (AKTGSGKT) is an ATP binding site. A DEAD box motif is present at residues 333-336 (DEAD). Residues 399 to 569 (GLEQGYVVCP…DIQSQLEKLI (171 aa)) form the Helicase C-terminal domain.

It belongs to the DEAD box helicase family. DDX18/HAS1 subfamily. As to quaternary structure, interacts with NOL8; the interaction is RNA-dependent. Interacts with PRC2 complex components EZH2, SUZ2 and JARID2; these interactions prevent deposition of the repressive H3K27me3 mark onto rDNA in pluripotent cells.

The protein resides in the nucleus. The protein localises to the nucleolus. It is found in the chromosome. The catalysed reaction is ATP + H2O = ADP + phosphate + H(+). In terms of biological role, ATP-dependent RNA helicase that plays a role in the regulation of R-loop homeostasis in both endogenous R-loop-prone regions and at sites of DNA damage. At endogenous loci such as actively transcribed genes, may act as a helicase to resolve the formation of R-loop during transcription and prevent the interference of R-loop with DNA-replication machinery. Also participates in the removal of DNA-lesion-associated R-loop. Plays an essential role for establishing pluripotency during embryogenesis and for pluripotency maintenance in embryonic stem cells. Mechanistically, prevents the polycomb repressive complex 2 (PRC2) from accessing rDNA loci and protects the active chromatin status in nucleolus. This chain is ATP-dependent RNA helicase DDX18 (DDX18), found in Homo sapiens (Human).